Reading from the N-terminus, the 356-residue chain is Butyrate kinase (356 aa).

This sequence belongs to the acetokinase family.

It is found in the cytoplasm. The enzyme catalyses butanoate + ATP = butanoyl phosphate + ADP. It functions in the pathway lipid metabolism; butanoate metabolism. Catalyzes the conversion of butyryl-CoA through butyryl phosphate to butyrate. The protein is Butyrate kinase (buk) of Clostridium perfringens (strain 13 / Type A).